The primary structure comprises 397 residues: Phosphoglycerate kinase (397 aa).

Substrate contacts are provided by residues 21 to 23, Arg37, 60 to 63, Arg119, and Arg152; these read DFN and HLGR. ATP contacts are provided by residues Lys203, Gly294, Glu325, and 354-357; that span reads GGDS.

This sequence belongs to the phosphoglycerate kinase family. In terms of assembly, monomer.

It is found in the cytoplasm. It carries out the reaction (2R)-3-phosphoglycerate + ATP = (2R)-3-phospho-glyceroyl phosphate + ADP. The protein operates within carbohydrate degradation; glycolysis; pyruvate from D-glyceraldehyde 3-phosphate: step 2/5. This is Phosphoglycerate kinase from Chlorobium limicola (strain DSM 245 / NBRC 103803 / 6330).